The chain runs to 970 residues: ATP-dependent DNA helicase DDX11 (970 aa).

In terms of domain architecture, Helicase ATP-binding spans 9-445 (GAIHFPFPFT…KNLMYLKQIL (437 aa)). 44-51 (SPTGTGKS) contributes to the ATP binding site. Residue Ser-262 is modified to Phosphoserine. [4Fe-4S] cluster is bound by residues Cys-267 and Cys-285. Positions 289–304 (QRSRHEKKKGAEEEKP) are enriched in basic and acidic residues. The disordered stretch occupies residues 289–312 (QRSRHEKKKGAEEEKPKRRRQEKQ). [4Fe-4S] cluster-binding residues include Cys-315 and Cys-350. A DEAH box motif is present at residues 393 to 396 (DEAH). Positions 818–849 (TLSPRPGTPREGSGGEPVHEGRQPVHRQGHQA) are disordered.

Belongs to the DEAD box helicase family. DEAH subfamily. DDX11/CHL1 sub-subfamily. Associates with the CTF18-RFC complex. Associates with a cohesin complex composed of RAD21, SMC1 proteins and SMC3. Interacts with CHTF18. Interacts with DSCC1. Interacts with FEN1; this interaction is direct and increases flap endonuclease activity of FEN1. Interacts with PCNA. Interacts with POLR1A and UBTF. Interacts with RAD21, SMC1 proteins and SMC3. Interacts with RFC2. Interacts with TIMELESS; this interaction increases recruitment of both proteins onto chromatin in response to replication stress induction by hydroxyurea. As to quaternary structure, (Microbial infection) Interacts with bovine papillomavirus type 1 regulatory protein E2; this interaction stimulates the recruitment of E2 onto mitotic chromosomes. The cofactor is Mg(2+). Requires [4Fe-4S] cluster as cofactor. Expressed in melanoma cells. Not detected in epidermal melanocytes of normal skin (at protein level). Highly expressed in spleen, B-cells, thymus, testis, ovary, small intestine and pancreas. Very low expression seen in brain. Expressed in dividing cells and/or cells undergoing high levels of recombination. No expression detected in cells signaled to terminally differentiate. Expressed weakly in keratinocytes.

It localises to the nucleus. Its subcellular location is the nucleolus. The protein localises to the cytoplasm. It is found in the cytoskeleton. The protein resides in the spindle pole. It localises to the midbody. Its subcellular location is the microtubule organizing center. The protein localises to the centrosome. It is found in the chromosome. It catalyses the reaction Couples ATP hydrolysis with the unwinding of duplex DNA at the replication fork by translocating in the 5'-3' direction. This creates two antiparallel DNA single strands (ssDNA). The leading ssDNA polymer is the template for DNA polymerase III holoenzyme which synthesizes a continuous strand.. The catalysed reaction is ATP + H2O = ADP + phosphate + H(+). Its activity is regulated as follows. ATPase activity is stimulated by high magnesium salt levels (up to a 0.1 M), and potassium salts (glutamate, chloride or acetate) are more effective than the corresponding sodium salts. ATPase activity is enhanced by the long non-coding RNA (lncRNA) cohesion regulator noncoding RNA (CONCR). Double-stranded DNA helicase activity is maximal with magnesium ions at low concentrations (0.5-1 mM) whereas is markedly inhibited at higher levels (5 mM and above). Double-stranded DNA helicase activity is stimulated by 25-50 mM potassium acetate, stimulated to a lesser extent by 25 mM of ammonium acetate, and markedly inhibited by sodium acetate. DNA-dependent ATPase and ATP-dependent DNA helicase that participates in various functions in genomic stability, including DNA replication, DNA repair and heterochromatin organization as well as in ribosomal RNA synthesis. Its double-stranded DNA helicase activity requires either a minimal 5'-single-stranded tail length of approximately 15 nt (flap substrates) or 10 nt length single-stranded gapped DNA substrates of a partial duplex DNA structure for helicase loading and translocation along DNA in a 5' to 3' direction. The helicase activity is capable of displacing duplex regions up to 100 bp, which can be extended up to 500 bp by the replication protein A (RPA) or the cohesion CTF18-replication factor C (Ctf18-RFC) complex activities. Also shows ATPase- and helicase activities on substrates that mimic key DNA intermediates of replication, repair and homologous recombination reactions, including forked duplex, anti-parallel G-quadruplex and three-stranded D-loop DNA molecules. Plays a role in DNA double-strand break (DSB) repair at the DNA replication fork during DNA replication recovery from DNA damage. Recruited with TIMELESS factor upon DNA-replication stress response at DNA replication fork to preserve replication fork progression, and hence ensure DNA replication fidelity. Also cooperates with TIMELESS factor during DNA replication to regulate proper sister chromatid cohesion and mitotic chromosome segregation. Stimulates 5'-single-stranded DNA flap endonuclease activity of FEN1 in an ATP- and helicase-independent manner; and hence it may contribute in Okazaki fragment processing at DNA replication fork during lagging strand DNA synthesis. Its ability to function at DNA replication fork is modulated by its binding to long non-coding RNA (lncRNA) cohesion regulator non-coding RNA DDX11-AS1/CONCR, which is able to increase both DDX11 ATPase activity and binding to DNA replicating regions. Also plays a role in heterochromatin organization. Involved in rRNA transcription activation through binding to active hypomethylated rDNA gene loci by recruiting UBTF and the RNA polymerase Pol I transcriptional machinery. Plays a role in embryonic development and prevention of aneuploidy. Involved in melanoma cell proliferation and survival. Associates with chromatin at DNA replication fork regions. Binds to single- and double-stranded DNAs. Its function is as follows. (Microbial infection) Required for bovine papillomavirus type 1 regulatory protein E2 loading onto mitotic chromosomes during DNA replication for the viral genome to be maintained and segregated. The chain is ATP-dependent DNA helicase DDX11 from Homo sapiens (Human).